The primary structure comprises 493 residues: Neuronal acetylcholine receptor subunit alpha-6 (493 aa).

The N-terminal stretch at 1–30 (MLNGWGRGDLRSGLCLWICGFLAFFKGSRG) is a signal peptide. Topologically, residues 31-240 (CVSEEQLFHT…TYSFYIRRLP (210 aa)) are extracellular. 2 N-linked (GlcNAc...) asparagine glycosylation sites follow: asparagine 54 and asparagine 171. 2 disulfides stabilise this stretch: cysteine 158-cysteine 172 and cysteine 222-cysteine 223. The next 3 helical transmembrane spans lie at 241–265 (MFYT…FYLP), 272–290 (VTLC…LVIT), and 306–327 (YLLF…VLNI). Over 328–464 (HYRTPATHTM…WKYMAMVVDR (137 aa)) the chain is Cytoplasmic. The residue at position 401 (serine 401) is a Phosphoserine. A helical transmembrane segment spans residues 465-484 (VFLWVFIIVCVFGTVGLFLQ).

It belongs to the ligand-gated ion channel (TC 1.A.9) family. Acetylcholine receptor (TC 1.A.9.1) subfamily. Alpha-6/CHRNA6 sub-subfamily. Neuronal AChR is composed of two different types of subunits: alpha and non-alpha (beta). CHRNA6/alpha-6 subunit can be combined to CHRNB2/beta-2 and CHRNA4/alpha-4 to give rise to functional receptors. Interacts with LYPD6. As to expression, predominantly expressed in only a few brain areas, including dopaminergic neurons, norepirephrine neurons and cells of the visual system.

It localises to the synaptic cell membrane. The catalysed reaction is Ca(2+)(in) = Ca(2+)(out). It catalyses the reaction K(+)(in) = K(+)(out). It carries out the reaction Na(+)(in) = Na(+)(out). With respect to regulation, activated by a myriad of ligands such as acetylcholine, cytisine and nicotine. CHRNA6 nAChR activity is inhibited by the antagonists alpha-conotoxin MII and PIA, a small disulfide-constrained peptides from cone snails. Functionally, component of neuronal acetylcholine receptors (nAChRs) that function as pentameric, ligand-gated cation channels with high calcium permeability among other activities. nAChRs are excitatory neurotrasnmitter receptors formed by a collection of nAChR subunits known to mediate synaptic transmission in the nervous system and the neuromuscular junction. Each nAchR subunit confers differential attributes to channel properties, including activation, deactivation and desensitization kinetics, pH sensitivity, cation permeability, and binding to allosteric modulators. CHRNA6 forms pentameric channels with CHRNB2 and CHRNA4 that exhibit high sensitivity to ACh and nicotine and are predominantly expressed in only a few brain areas, including dopaminergic neurons, norepirephrine neurons and cells of the visual system. nAChrs containing CHRNA6 subunits mediate endogenous cholinergic modulation of dopamine and gamma-aminobutyric acid (GABA) release in response to nicotine at nerve terminals. The polypeptide is Neuronal acetylcholine receptor subunit alpha-6 (Chrna6) (Rattus norvegicus (Rat)).